The primary structure comprises 496 residues: Cobyric acid synthase (496 aa).

In terms of domain architecture, GATase cobBQ-type spans 250–437 (TLKVIAPALP…LHGLFESPQA (188 aa)). Cys-331 (nucleophile) is an active-site residue. Residue His-429 is part of the active site.

Belongs to the CobB/CobQ family. CobQ subfamily.

The protein operates within cofactor biosynthesis; adenosylcobalamin biosynthesis. Catalyzes amidations at positions B, D, E, and G on adenosylcobyrinic A,C-diamide. NH(2) groups are provided by glutamine, and one molecule of ATP is hydrogenolyzed for each amidation. This is Cobyric acid synthase from Hahella chejuensis (strain KCTC 2396).